The chain runs to 222 residues: Flagellar L-ring protein (222 aa).

The signal sequence occupies residues 1–21 (MQTFLYPRTWLILGLLLLGSG). Cysteine 22 is lipidated: N-palmitoyl cysteine. A lipid anchor (S-diacylglycerol cysteine) is attached at cysteine 22.

Belongs to the FlgH family. The basal body constitutes a major portion of the flagellar organelle and consists of four rings (L,P,S, and M) mounted on a central rod.

It localises to the cell outer membrane. The protein resides in the bacterial flagellum basal body. In terms of biological role, assembles around the rod to form the L-ring and probably protects the motor/basal body from shearing forces during rotation. The chain is Flagellar L-ring protein from Methylobacillus flagellatus (strain ATCC 51484 / DSM 6875 / VKM B-1610 / KT).